The chain runs to 365 residues: MKKYNKSFLIDVNCETLKVRQAFPFTALIGQTNMKLALILNVIDPKIGGVMSMGDRGTGKSTIVRSLVDLLPNIQVVSEDPFNSDPIDYDLMSQEVKEAKKSGEKIYTTSIKTPMVDLPLGATEDRVCGTIDIEKALIDGTKAFEPGLLAKANRGILYVDEVNLLDDHLVDILLDSAAGGWNTVEREGISIVHPARFILIGSGNPEEGELRPQLLDRFGMHVRIKTIKDPLSRVKIVERRSNFDKSAESFLKNYEYLQDFLKNRIVNAQGSLKDIKIDYQYKVNIAELCSNLNIDGLRGDIVTNRAVKAFVALNSRKTVLDKDVFTIMSLCLTHRLKKNPLESIDSSQNIVTIFKDIFGYSDLTA.

Residue 54-61 (GDRGTGKS) coordinates ATP.

Belongs to the Mg-chelatase subunits D/I family.

The protein localises to the plastid. The protein resides in the chloroplast. It catalyses the reaction protoporphyrin IX + Mg(2+) + ATP + H2O = Mg-protoporphyrin IX + ADP + phosphate + 3 H(+). It participates in porphyrin-containing compound metabolism; chlorophyll biosynthesis. In terms of biological role, involved in chlorophyll biosynthesis; introduces a magnesium ion into protoporphyrin IX to yield Mg-protoporphyrin IX. This is Magnesium-chelatase subunit ChlI (chlI) from Bigelowiella natans (Pedinomonas minutissima).